The primary structure comprises 289 residues: ATP synthase gamma chain (289 aa).

The protein belongs to the ATPase gamma chain family. F-type ATPases have 2 components, CF(1) - the catalytic core - and CF(0) - the membrane proton channel. CF(1) has five subunits: alpha(3), beta(3), gamma(1), delta(1), epsilon(1). CF(0) has three main subunits: a, b and c.

It is found in the cell inner membrane. In terms of biological role, produces ATP from ADP in the presence of a proton gradient across the membrane. The gamma chain is believed to be important in regulating ATPase activity and the flow of protons through the CF(0) complex. The chain is ATP synthase gamma chain from Coxiella burnetii (strain Dugway 5J108-111).